Reading from the N-terminus, the 386-residue chain is S-adenosylmethionine synthase (386 aa).

Position 17 (His17) interacts with ATP. Asp19 is a Mg(2+) binding site. K(+) is bound at residue Glu45. Residues Glu58 and Gln101 each contribute to the L-methionine site. Positions Gln101–Glu111 are flexible loop. ATP is bound by residues Asp168–Lys170, Asp242, Arg248–Lys249, Ala265, and Lys269. Asp242 contacts L-methionine. Residue Lys273 coordinates L-methionine.

This sequence belongs to the AdoMet synthase family. In terms of assembly, homotetramer; dimer of dimers. The cofactor is Mg(2+). Requires K(+) as cofactor.

Its subcellular location is the cytoplasm. It carries out the reaction L-methionine + ATP + H2O = S-adenosyl-L-methionine + phosphate + diphosphate. It participates in amino-acid biosynthesis; S-adenosyl-L-methionine biosynthesis; S-adenosyl-L-methionine from L-methionine: step 1/1. Its function is as follows. Catalyzes the formation of S-adenosylmethionine (AdoMet) from methionine and ATP. The overall synthetic reaction is composed of two sequential steps, AdoMet formation and the subsequent tripolyphosphate hydrolysis which occurs prior to release of AdoMet from the enzyme. In Leptospira interrogans serogroup Icterohaemorrhagiae serovar copenhageni (strain Fiocruz L1-130), this protein is S-adenosylmethionine synthase.